Reading from the N-terminus, the 274-residue chain is Cytochrome b-c1 complex subunit Rieske, mitochondrial (274 aa).

At 79-103 (SHTDVRVPDFSEYRRLEVLDSTKSS) the chain is on the mitochondrial matrix side. The helical transmembrane segment at 104 to 140 (RESSEARKGFSYLVTGVTTVGVAYAAKNVVTQFVSSM) threads the bilayer. The Mitochondrial intermembrane segment spans residues 141-274 (SASADVLALA…FTSDDMVIVG (134 aa)). Residues 187-272 (EAAVELSQLR…YEFTSDDMVI (86 aa)) form the Rieske domain. [2Fe-2S] cluster contacts are provided by Cys-217, His-219, Cys-236, His-239, and Ser-241. Cys-222 and Cys-238 form a disulfide bridge.

It belongs to the Rieske iron-sulfur protein family. Component of the ubiquinol-cytochrome c oxidoreductase (cytochrome b-c1 complex, complex III, CIII), a multisubunit enzyme composed of 11 subunits. The complex is composed of 3 respiratory subunits cytochrome b, cytochrome c1 and Rieske protein UQCRFS1, 2 core protein subunits UQCRC1/QCR1 and UQCRC2/QCR2, and 6 low-molecular weight protein subunits UQCRH/QCR6, UQCRB/QCR7, UQCRQ/QCR8, UQCR10/QCR9, UQCR11/QCR10 and subunit 9, the cleavage product of Rieske protein UQCRFS1. The complex exists as an obligatory dimer and forms supercomplexes (SCs) in the inner mitochondrial membrane with NADH-ubiquinone oxidoreductase (complex I, CI) and cytochrome c oxidase (complex IV, CIV), resulting in different assemblies (supercomplex SCI(1)III(2)IV(1) and megacomplex MCI(2)III(2)IV(2)). Incorporation of the Rieske protein UQCRFS1 is the penultimate step in complex III assembly. Interacts with TTC19, which is involved in the clearance of UQCRFS1 fragments. In terms of assembly, component of the ubiquinol-cytochrome c oxidoreductase (cytochrome b-c1 complex, complex III, CIII). Subunit 9 corresponds to the mitochondrial targeting sequence (MTS) of Rieske protein UQCRFS1. It is retained after processing and incorporated inside complex III, where it remains bound to the complex and localizes between the 2 core subunits UQCRC1/QCR1 and UQCRC2/QCR2. [2Fe-2S] cluster serves as cofactor. Proteolytic processing is necessary for the correct insertion of UQCRFS1 in the complex III dimer. Several fragments are generated during UQCRFS1 insertion, most probably due to the endogenous matrix-processing peptidase (MPP) activity of the 2 core protein subunits UQCRC1/QCR1 and UQCRC2/QCR2, which are homologous to the 2 mitochondrial-processing peptidase (MPP) subunits beta-MPP and alpha-MPP respectively. The action of the protease is also necessary for the clearance of the UQCRFS1 fragments.

Its subcellular location is the mitochondrion inner membrane. The enzyme catalyses a quinol + 2 Fe(III)-[cytochrome c](out) = a quinone + 2 Fe(II)-[cytochrome c](out) + 2 H(+)(out). Its function is as follows. Component of the ubiquinol-cytochrome c oxidoreductase, a multisubunit transmembrane complex that is part of the mitochondrial electron transport chain which drives oxidative phosphorylation. The respiratory chain contains 3 multisubunit complexes succinate dehydrogenase (complex II, CII), ubiquinol-cytochrome c oxidoreductase (cytochrome b-c1 complex, complex III, CIII) and cytochrome c oxidase (complex IV, CIV), that cooperate to transfer electrons derived from NADH and succinate to molecular oxygen, creating an electrochemical gradient over the inner membrane that drives transmembrane transport and the ATP synthase. The cytochrome b-c1 complex catalyzes electron transfer from ubiquinol to cytochrome c, linking this redox reaction to translocation of protons across the mitochondrial inner membrane, with protons being carried across the membrane as hydrogens on the quinol. In the process called Q cycle, 2 protons are consumed from the matrix, 4 protons are released into the intermembrane space and 2 electrons are passed to cytochrome c. The Rieske protein is a catalytic core subunit containing a [2Fe-2S] iron-sulfur cluster. It cycles between 2 conformational states during catalysis to transfer electrons from the quinol bound in the Q(0) site in cytochrome b to cytochrome c1. Incorporation of UQCRFS1 is the penultimate step in complex III assembly. In terms of biological role, component of the ubiquinol-cytochrome c oxidoreductase (cytochrome b-c1 complex, complex III, CIII). UQCRFS1 undergoes proteolytic processing once it is incorporated in the complex III dimer. One of the fragments, called subunit 9, corresponds to its mitochondrial targeting sequence (MTS). The proteolytic processing is necessary for the correct insertion of UQCRFS1 in the complex III dimer, but the persistence of UQCRFS1-derived fragments may prevent newly imported UQCRFS1 to be processed and assembled into complex III and is detrimental for the complex III structure and function. In Pongo pygmaeus (Bornean orangutan), this protein is Cytochrome b-c1 complex subunit Rieske, mitochondrial (UQCRFS1).